A 170-amino-acid polypeptide reads, in one-letter code: Adenine phosphoribosyltransferase (170 aa).

This sequence belongs to the purine/pyrimidine phosphoribosyltransferase family. As to quaternary structure, homodimer.

It is found in the cytoplasm. The catalysed reaction is AMP + diphosphate = 5-phospho-alpha-D-ribose 1-diphosphate + adenine. The protein operates within purine metabolism; AMP biosynthesis via salvage pathway; AMP from adenine: step 1/1. Its function is as follows. Catalyzes a salvage reaction resulting in the formation of AMP, that is energically less costly than de novo synthesis. The sequence is that of Adenine phosphoribosyltransferase from Acholeplasma laidlawii (strain PG-8A).